A 337-amino-acid polypeptide reads, in one-letter code: MVSMHIPVLYDAALAALNLRPDGRYIDGTLGWAGHSSGILEGSGPTGRLLAIDQDPMALAAARERLAPYGERATIVHGNYRQMASLAAQHGWQQVDGILLDIGVSSPQLDLPERGFSFQYDAPLDMRMNPTRGESAADLIAQLDETSLANLIYEYGEERLSRRIARRIVEQRSKSPITSTAQLASLVKSAVGGQAGKTHPATRTFQALRIAVNDELGALREGLAAATNLLAPGGRLAVITFHSLEDRIVKEWMRDQASECLIPAKLEILACPHNCAANTGPRSCIYPVGRDCDYVPTLEVLSRKPIEATPEELKANPRARSAKLRVAERRLTKTLAS.

S-adenosyl-L-methionine-binding positions include Ala-33–His-35, Asp-53, Asp-101, and Gln-108.

It belongs to the methyltransferase superfamily. RsmH family.

Its subcellular location is the cytoplasm. It catalyses the reaction cytidine(1402) in 16S rRNA + S-adenosyl-L-methionine = N(4)-methylcytidine(1402) in 16S rRNA + S-adenosyl-L-homocysteine + H(+). Functionally, specifically methylates the N4 position of cytidine in position 1402 (C1402) of 16S rRNA. This chain is Ribosomal RNA small subunit methyltransferase H, found in Herpetosiphon aurantiacus (strain ATCC 23779 / DSM 785 / 114-95).